Here is a 289-residue protein sequence, read N- to C-terminus: ATP synthase gamma chain (289 aa).

Belongs to the ATPase gamma chain family. In terms of assembly, F-type ATPases have 2 components, CF(1) - the catalytic core - and CF(0) - the membrane proton channel. CF(1) has five subunits: alpha(3), beta(3), gamma(1), delta(1), epsilon(1). CF(0) has three main subunits: a, b and c.

It is found in the cell inner membrane. Its function is as follows. Produces ATP from ADP in the presence of a proton gradient across the membrane. The gamma chain is believed to be important in regulating ATPase activity and the flow of protons through the CF(0) complex. The sequence is that of ATP synthase gamma chain from Pasteurella multocida (strain Pm70).